The following is a 271-amino-acid chain: Bis(5'-nucleosyl)-tetraphosphatase, symmetrical (271 aa).

This sequence belongs to the Ap4A hydrolase family.

The enzyme catalyses P(1),P(4)-bis(5'-adenosyl) tetraphosphate + H2O = 2 ADP + 2 H(+). Hydrolyzes diadenosine 5',5'''-P1,P4-tetraphosphate to yield ADP. The chain is Bis(5'-nucleosyl)-tetraphosphatase, symmetrical from Aliivibrio fischeri (strain MJ11) (Vibrio fischeri).